The primary structure comprises 308 residues: tRNA dimethylallyltransferase 2 (308 aa).

13–20 (GPTASGKT) contributes to the ATP binding site. Residue 15-20 (TASGKT) coordinates substrate. Positions 38 to 41 (DSRQ) are interaction with substrate tRNA.

The protein belongs to the IPP transferase family. As to quaternary structure, monomer. It depends on Mg(2+) as a cofactor.

The catalysed reaction is adenosine(37) in tRNA + dimethylallyl diphosphate = N(6)-dimethylallyladenosine(37) in tRNA + diphosphate. Functionally, catalyzes the transfer of a dimethylallyl group onto the adenine at position 37 in tRNAs that read codons beginning with uridine, leading to the formation of N6-(dimethylallyl)adenosine (i(6)A). The sequence is that of tRNA dimethylallyltransferase 2 from Bacteroides fragilis (strain YCH46).